Consider the following 63-residue polypeptide: Large ribosomal subunit protein uL30 (63 aa).

Belongs to the universal ribosomal protein uL30 family. As to quaternary structure, part of the 50S ribosomal subunit.

The protein is Large ribosomal subunit protein uL30 of Methylobacterium sp. (strain 4-46).